The chain runs to 445 residues: Dolichyl-diphosphooligosaccharide--protein glycosyltransferase 48 kDa subunit (445 aa).

The first 32 residues, 1–32 (MRRRRKMEAGAAARAWSLLWLLLPLLGPVCAS), serve as a signal peptide directing secretion. Residues 33–415 (GPRTLVLLDN…QYERFIPSAY (383 aa)) are Lumenal-facing. The chain crosses the membrane as a helical span at residues 416–436 (PYYASAFSMMLGLFIFSTVFL). Topologically, residues 437-445 (HMKEKEKSD) are cytoplasmic.

It belongs to the DDOST 48 kDa subunit family. As to quaternary structure, component of the oligosaccharyltransferase (OST) complex. OST exists in two different complex forms which contain common core subunits RPN1, RPN2, OST48, OST4, DAD1 and TMEM258, either STT3A or STT3B as catalytic subunits, and form-specific accessory subunits. STT3A complex assembly occurs through the formation of 3 subcomplexes. Subcomplex 1 contains RPN1 and TMEM258, subcomplex 2 contains the STT3A-specific subunits STT3A, DC2/OSTC, and KCP2 as well as the core subunit OST4, and subcomplex 3 contains RPN2, DAD1, and OST48. The STT3A complex can form stable complexes with the Sec61 complex or with both the Sec61 and TRAP complexes. Interacts with SMIM22.

Its subcellular location is the endoplasmic reticulum. The protein localises to the endoplasmic reticulum membrane. Its pathway is protein modification; protein glycosylation. In terms of biological role, subunit of the oligosaccharyl transferase (OST) complex that catalyzes the initial transfer of a defined glycan (Glc(3)Man(9)GlcNAc(2) in eukaryotes) from the lipid carrier dolichol-pyrophosphate to an asparagine residue within an Asn-X-Ser/Thr consensus motif in nascent polypeptide chains, the first step in protein N-glycosylation. N-glycosylation occurs cotranslationally and the complex associates with the Sec61 complex at the channel-forming translocon complex that mediates protein translocation across the endoplasmic reticulum (ER). All subunits are required for a maximal enzyme activity. Required for the assembly of both SST3A- and SS3B-containing OST complexes. The chain is Dolichyl-diphosphooligosaccharide--protein glycosyltransferase 48 kDa subunit from Canis lupus familiaris (Dog).